The primary structure comprises 241 residues: MSAIKDERNNDHLVQSHDPEHPANLIPALCRNFYGHGWVTGTGGGASIKRDNHIFIAPSGVQKELIQPHNIFVLQYPTPKYPPSARQYIRKPLELKPSACTPLFLAAFDRGAGCCIHTHSQWAVLVTLLVEREKGLEGCFEISNIEQIKGIPKGKGKGMMGFFDTLKIPIIENTAFEEDLTSSLEEAMEKYPDTYAVLVRRHGIYVWGDDVAKAKTQCESLDYLFQLAVEMHKLGLPWVKP.

The disordered stretch occupies residues 1 to 20 (MSAIKDERNNDHLVQSHDPE). Cys100 serves as a coordination point for substrate. Zn(2+) contacts are provided by His117 and His119. Glu146 (proton donor/acceptor) is an active-site residue. A Zn(2+)-binding site is contributed by His202.

It belongs to the aldolase class II family. MtnB subfamily. Zn(2+) is required as a cofactor.

Its subcellular location is the cytoplasm. It catalyses the reaction 5-(methylsulfanyl)-D-ribulose 1-phosphate = 5-methylsulfanyl-2,3-dioxopentyl phosphate + H2O. The protein operates within amino-acid biosynthesis; L-methionine biosynthesis via salvage pathway; L-methionine from S-methyl-5-thio-alpha-D-ribose 1-phosphate: step 2/6. Catalyzes the dehydration of methylthioribulose-1-phosphate (MTRu-1-P) into 2,3-diketo-5-methylthiopentyl-1-phosphate (DK-MTP-1-P). The sequence is that of Methylthioribulose-1-phosphate dehydratase from Blastomyces gilchristii (strain SLH14081) (Blastomyces dermatitidis).